The primary structure comprises 263 residues: N-acyl homoserine lactonase AttM (263 aa).

H103, H105, D107, H108, H180, D202, and H247 together coordinate Zn(2+).

The protein belongs to the metallo-beta-lactamase superfamily. Zn(2+) is required as a cofactor.

The catalysed reaction is an N-acyl-L-homoserine lactone + H2O = an N-acyl-L-homoserine + H(+). In Agrobacterium fabrum (strain C58 / ATCC 33970) (Agrobacterium tumefaciens (strain C58)), this protein is N-acyl homoserine lactonase AttM.